Here is a 208-residue protein sequence, read N- to C-terminus: Large ribosomal subunit protein bL25 (208 aa).

Positions 188-208 (AVETETEEETTTGESPAQPAE) are disordered.

Belongs to the bacterial ribosomal protein bL25 family. CTC subfamily. As to quaternary structure, part of the 50S ribosomal subunit; part of the 5S rRNA/L5/L18/L25 subcomplex. Contacts the 5S rRNA. Binds to the 5S rRNA independently of L5 and L18.

In terms of biological role, this is one of the proteins that binds to the 5S RNA in the ribosome where it forms part of the central protuberance. The protein is Large ribosomal subunit protein bL25 of Moorella thermoacetica (strain ATCC 39073 / JCM 9320).